We begin with the raw amino-acid sequence, 330 residues long: Aspartate--ammonia ligase (330 aa).

The protein belongs to the class-II aminoacyl-tRNA synthetase family. AsnA subfamily.

It is found in the cytoplasm. It catalyses the reaction L-aspartate + NH4(+) + ATP = L-asparagine + AMP + diphosphate + H(+). Its pathway is amino-acid biosynthesis; L-asparagine biosynthesis; L-asparagine from L-aspartate (ammonia route): step 1/1. This is Aspartate--ammonia ligase from Streptococcus uberis (strain ATCC BAA-854 / 0140J).